Here is a 172-residue protein sequence, read N- to C-terminus: Adrenodoxin homolog, mitochondrial (172 aa).

The transit peptide at 1 to 16 directs the protein to the mitochondrion; sequence MLKIVTRAGHTARISN. The 2Fe-2S ferredoxin-type domain occupies 61–163; the sequence is LKITFILKDG…GIRVALPQMT (103 aa). Residues Cys98, Cys104, Cys107, and Cys144 each coordinate [2Fe-2S] cluster.

Belongs to the adrenodoxin/putidaredoxin family. In terms of assembly, interacts in its reduced state with the apo form of ISU1. [2Fe-2S] cluster serves as cofactor.

Its subcellular location is the mitochondrion matrix. Functionally, iron-sulfur protein that transfers electrons in a wide variety of metabolic reactions. Involved in heme A biosynthesis and in iron-sulfur cluster assembly. Transfers electrons from adrenodoxin reductase ARH1 to heme A synthase COX15, a heme protein that catalyzes the conversion of heme O to heme A. Required for the de novo synthesis of Fe-S clusters on iron sulfur cluster assembly protein ISU1. Interact in its reduced state with ISU1 to productively deliver electrons for Fe-S cluster synthesis. Essential for coenzyme Q biosynthesis. May transfer the electrons required for the hydroxylation reaction performed by COQ6. This is Adrenodoxin homolog, mitochondrial from Saccharomyces cerevisiae (strain ATCC 204508 / S288c) (Baker's yeast).